A 325-amino-acid polypeptide reads, in one-letter code: CRISPR-associated endonuclease Cas1 2 (325 aa).

Mn(2+) is bound by residues Glu145, His212, and Asp225. Positions 283-325 (EEEDPVEEDPTRPGGLWDLEGEVEGGVAYGGDDPGEGAEEPEG) are disordered. Acidic residues predominate over residues 315–325 (DPGEGAEEPEG).

This sequence belongs to the CRISPR-associated endonuclease Cas1 family. In terms of assembly, homodimer, forms a heterotetramer with a Cas2 homodimer. Requires Mg(2+) as cofactor. Mn(2+) is required as a cofactor.

CRISPR (clustered regularly interspaced short palindromic repeat), is an adaptive immune system that provides protection against mobile genetic elements (viruses, transposable elements and conjugative plasmids). CRISPR clusters contain spacers, sequences complementary to antecedent mobile elements, and target invading nucleic acids. CRISPR clusters are transcribed and processed into CRISPR RNA (crRNA). Acts as a dsDNA endonuclease. Involved in the integration of spacer DNA into the CRISPR cassette. In Thermus thermophilus (strain ATCC 27634 / DSM 579 / HB8), this protein is CRISPR-associated endonuclease Cas1 2.